The chain runs to 446 residues: Low-affinity gluconate transporter (446 aa).

Position 1 (Met-1) is a topological domain, cytoplasmic. Residues 2–22 form a helical membrane-spanning segment; sequence TTLTLVLTAVGSVLLLLFLVM. At 23–26 the chain is on the periplasmic side; the sequence is KARM. A helical membrane pass occupies residues 27–47; that stretch reads HAFLALMVVSMGAGLFSGMPL. The Cytoplasmic portion of the chain corresponds to 48–58; the sequence is DKIAATMEKGM. A helical membrane pass occupies residues 59-79; that stretch reads GGTLGFLAVVVALGAMFGKIL. Topologically, residues 80–109 are periplasmic; the sequence is HETGAVDQIAVKMLKSFGHSRAHYAIGLAG. The chain crosses the membrane as a helical span at residues 110–130; sequence LVCALPLFFEVAIVLLISVAF. Topologically, residues 131-142 are cytoplasmic; it reads SMARHTGTNLVK. Residues 143-163 traverse the membrane as a helical segment; it reads LVIPLFAGVAAAAAFLVPGPA. Residues 164–176 lie on the Periplasmic side of the membrane; sequence PMLLASQMNADFG. The helical transmembrane segment at 177–197 threads the bilayer; the sequence is WMILIGLCAAIPGMIIAGPLW. The Cytoplasmic segment spans residues 198 to 225; sequence GNFISRYVELHIPDDISEPHLGEGKMPS. Residues 226–246 form a helical membrane-spanning segment; it reads FGFSLSLILLPLVLVGLKTIA. At 247-261 the chain is on the periplasmic side; it reads ARFVPEGSTAYEWFE. A helical transmembrane segment spans residues 262 to 282; the sequence is FIGHPFTAILVACLVAIYGLA. The Cytoplasmic segment spans residues 283–294; it reads MRQGMPKDKVME. The chain crosses the membrane as a helical span at residues 295–315; the sequence is ICGHALQPAGIILLVIGAGGV. Residues 316–330 lie on the Periplasmic side of the membrane; that stretch reads FKQVLVDSGVGPALG. The helical transmembrane segment at 331 to 351 threads the bilayer; that stretch reads EALTGMGLPIAITCFVLAAAV. A topological domain (cytoplasmic) is located at residue Arg-352. The helical transmembrane segment at 353–373 threads the bilayer; that stretch reads IIQGSATVACLTAVGLVMPVI. Over 374-387 the chain is Periplasmic; the sequence is EQLNYSGAQMAALS. Residues 388–408 form a helical membrane-spanning segment; the sequence is ICIAGGSIVVSHVNDAGFWLF. At 409-424 the chain is on the cytoplasmic side; that stretch reads GKFTGATEAETLKTWT. Residues 425–445 form a helical membrane-spanning segment; the sequence is MMETILGTVGAIVGMIAFQLL. A topological domain (periplasmic) is located at residue Ser-446.

The protein belongs to the GntP permease family.

Its subcellular location is the cell inner membrane. Functionally, part of the gluconate utilization system Gnt-I; low-affinity intake of gluconate. The sequence is that of Low-affinity gluconate transporter (gntU) from Escherichia coli O157:H7.